Consider the following 751-residue polypeptide: ABC transporter G family member 22 (751 aa).

The disordered stretch occupies residues 26–81 (ADIRSPHGSMDANGVPATAPAAVGGGGTLSRKSSRRLMGMSPGRSSGAGTHIRKSR). An ABC transporter domain is found at 157 to 403 (LKFRDVTYKV…FSSIGCSPLI (247 aa)). 197–204 (GPSGSGKT) contacts ATP. The region spanning 498–707 (EQYCILFCRG…TYKLLLKVQY (210 aa)) is the ABC transmembrane type-2 domain. Helical transmembrane passes span 516–536 (FSWL…LLWW), 552–572 (LLFF…IFAF), 602–622 (LPLD…MTGL), 634–654 (LTVF…GAIL), 666–686 (VTVM…PVFI), and 722–742 (GLTE…LAYL).

It belongs to the ABC transporter superfamily. ABCG family. Eye pigment precursor importer (TC 3.A.1.204) subfamily.

The protein localises to the membrane. In Arabidopsis thaliana (Mouse-ear cress), this protein is ABC transporter G family member 22 (ABCG22).